A 446-amino-acid polypeptide reads, in one-letter code: Aspartokinase (446 aa).

Residues 250–294 (IPLVKSTYMEESALNTKHSTKIDIPEDASGSTYKLPIELALQNRY) enclose the RPE1 insert domain.

It belongs to the aspartokinase family.

It carries out the reaction L-aspartate + ATP = 4-phospho-L-aspartate + ADP. Its pathway is amino-acid biosynthesis; L-lysine biosynthesis via DAP pathway; (S)-tetrahydrodipicolinate from L-aspartate: step 1/4. The protein operates within amino-acid biosynthesis; L-methionine biosynthesis via de novo pathway; L-homoserine from L-aspartate: step 1/3. It participates in amino-acid biosynthesis; L-threonine biosynthesis; L-threonine from L-aspartate: step 1/5. The chain is Aspartokinase (lysC) from Rickettsia prowazekii (strain Madrid E).